Reading from the N-terminus, the 541-residue chain is Formimidoyltransferase-cyclodeaminase (541 aa).

The segment at 1–181 (MSQLVECVPN…GATVTGARKF (181 aa)) is formiminotransferase N-subdomain. The active-site For formimidoyltransferase activity is histidine 82. 163–172 (GPSSFVPSWG) is a binding site for folate. The formiminotransferase C-subdomain stretch occupies residues 182–326 (LIAFNINLLS…PKERIIEYLV (145 aa)). Residues 327-334 (PDSGPEQS) form a linker region. Residues 335–541 (LLDTSLRGFV…VLGSLEARKE (207 aa)) form a cyclodeaminase/cyclohydrolase region. Residue aspartate 412 is the For cyclodeaminase activity of the active site. Phosphoserine is present on serine 520.

In the C-terminal section; belongs to the cyclodeaminase/cyclohydrolase family. The protein in the N-terminal section; belongs to the formiminotransferase family. Homooctamer, including four polyglutamate binding sites. The subunits are arranged as a tetramer of dimers, and form a planar ring-shaped structure.

It localises to the cytoplasm. Its subcellular location is the cytoskeleton. The protein resides in the microtubule organizing center. The protein localises to the centrosome. It is found in the centriole. It localises to the golgi apparatus. It catalyses the reaction 5-formimidoyltetrahydrofolate + L-glutamate = N-formimidoyl-L-glutamate + (6S)-5,6,7,8-tetrahydrofolate. It carries out the reaction (6S)-5-formyl-5,6,7,8-tetrahydrofolate + L-glutamate = N-formyl-L-glutamate + (6S)-5,6,7,8-tetrahydrofolate + H(+). The catalysed reaction is 5-formimidoyltetrahydrofolate + 2 H(+) = (6R)-5,10-methenyltetrahydrofolate + NH4(+). It participates in amino-acid degradation; L-histidine degradation into L-glutamate; L-glutamate from N-formimidoyl-L-glutamate (transferase route): step 1/1. It functions in the pathway one-carbon metabolism; tetrahydrofolate interconversion. Its function is as follows. Folate-dependent enzyme, that displays both transferase and deaminase activity. Serves to channel one-carbon units from formiminoglutamate to the folate pool. In terms of biological role, binds and promotes bundling of vimentin filaments originating from the Golgi. The chain is Formimidoyltransferase-cyclodeaminase (Ftcd) from Mus musculus (Mouse).